A 349-amino-acid polypeptide reads, in one-letter code: Isopentenyl-diphosphate delta-isomerase (349 aa).

Arginine 9–lysine 10 is a binding site for substrate. FMN-binding positions include alanine 65 to threonine 67, serine 95, and asparagine 124. Serine 95–histidine 97 provides a ligand contact to substrate. Glutamine 154 lines the substrate pocket. Residue glutamate 155 coordinates Mg(2+). FMN is bound by residues lysine 186, serine 211, threonine 216, glycine 262 to arginine 264, and serine 283 to arginine 284.

The protein belongs to the IPP isomerase type 2 family. As to quaternary structure, homooctamer. Dimer of tetramers. FMN serves as cofactor. NADPH is required as a cofactor. It depends on Mg(2+) as a cofactor.

The protein localises to the cytoplasm. The catalysed reaction is isopentenyl diphosphate = dimethylallyl diphosphate. In terms of biological role, involved in the biosynthesis of isoprenoids. Catalyzes the 1,3-allylic rearrangement of the homoallylic substrate isopentenyl (IPP) to its allylic isomer, dimethylallyl diphosphate (DMAPP). The sequence is that of Isopentenyl-diphosphate delta-isomerase from Staphylococcus aureus.